Consider the following 871-residue polypeptide: Bifunctional cordycepin biosynthesis cluster protein 3 (871 aa).

It participates in secondary metabolite biosynthesis. Nucleoside/nucleotide kinase; part of the gene cluster that mediates the biosynthesis of cordycepin (COR) and pentostatin (PTN), two adenosine analogs with related bioactivity profiles as both mimic adenosine and can inhibit some of the processes that are adenosine dependent. Within the pathway, cns3 catalyzes both the first step of cordycepin biosynthesis by phosphorylating adenosine into 3'-AMP via its kinase activity and the conversion of adenosine into pentostatin via its ATP phosphoribosyltransferase activity. The first step of cordycepin biosynthesis involves hydroxyl phosphorylation of the 3'-OH position on adenosine to produce adenosine-3'-monophosphate (3'-AMP), catalyzed by kinase activity of cns3. Next, 3'-AMP is dephosphorylated to 2'-carbonyl-3'-deoxyadenosine (2'-C-3'-dA) by cns2, which is finally converted to cordycepin (3'-deoxyadenosine) by the oxidoreductase cns1. The polypeptide is Bifunctional cordycepin biosynthesis cluster protein 3 (Cordyceps militaris (strain CM01) (Caterpillar fungus)).